Here is a 103-residue protein sequence, read N- to C-terminus: Large ribosomal subunit protein bL21 (103 aa).

The protein belongs to the bacterial ribosomal protein bL21 family. Part of the 50S ribosomal subunit. Contacts protein L20.

Its function is as follows. This protein binds to 23S rRNA in the presence of protein L20. This Salmonella paratyphi A (strain ATCC 9150 / SARB42) protein is Large ribosomal subunit protein bL21.